Reading from the N-terminus, the 96-residue chain is Non-specific lipid-transfer protein 2 (96 aa).

A signal peptide spans 1-27; that stretch reads MMRRLAVLVLAVAMVAACGGGVVGVAG. Cystine bridges form between cysteine 30-cysteine 62, cysteine 38-cysteine 52, cysteine 53-cysteine 88, and cysteine 64-cysteine 95.

This sequence belongs to the plant LTP family. B11E subfamily.

Transfer lipids across membranes. May play a role in plant defense or in the biosynthesis of cuticle layers. In Oryza sativa subsp. indica (Rice), this protein is Non-specific lipid-transfer protein 2 (LTP-2).